A 471-amino-acid polypeptide reads, in one-letter code: Glutamate--tRNA ligase 1 (471 aa).

The short motif at 15–25 (PSPTGYLHIGG) is the 'HIGH' region element. A 'KMSKS' region motif is present at residues 243 to 247 (KLSKR). Lys-246 provides a ligand contact to ATP.

Belongs to the class-I aminoacyl-tRNA synthetase family. Glutamate--tRNA ligase type 1 subfamily. Monomer.

The protein resides in the cytoplasm. The enzyme catalyses tRNA(Glu) + L-glutamate + ATP = L-glutamyl-tRNA(Glu) + AMP + diphosphate. In terms of biological role, catalyzes the attachment of glutamate to tRNA(Glu) in a two-step reaction: glutamate is first activated by ATP to form Glu-AMP and then transferred to the acceptor end of tRNA(Glu). This chain is Glutamate--tRNA ligase 1, found in Dinoroseobacter shibae (strain DSM 16493 / NCIMB 14021 / DFL 12).